The sequence spans 94 residues: Histone-like DNA-binding protein (94 aa).

It belongs to the bacterial histone-like protein family.

The chain is Histone-like DNA-binding protein from Rickettsia bellii (strain RML369-C).